An 874-amino-acid polypeptide reads, in one-letter code: Alanine--tRNA ligase (874 aa).

Positions 564, 568, 665, and 669 each coordinate Zn(2+).

It belongs to the class-II aminoacyl-tRNA synthetase family. Zn(2+) is required as a cofactor.

The protein resides in the cytoplasm. The enzyme catalyses tRNA(Ala) + L-alanine + ATP = L-alanyl-tRNA(Ala) + AMP + diphosphate. In terms of biological role, catalyzes the attachment of alanine to tRNA(Ala) in a two-step reaction: alanine is first activated by ATP to form Ala-AMP and then transferred to the acceptor end of tRNA(Ala). Also edits incorrectly charged Ser-tRNA(Ala) and Gly-tRNA(Ala) via its editing domain. In Paraburkholderia xenovorans (strain LB400), this protein is Alanine--tRNA ligase.